Consider the following 350-residue polypeptide: Ferredoxin--NADP reductase (350 aa).

T14, D33, Q41, Y46, A86, F121, D286, and T327 together coordinate FAD.

The protein belongs to the ferredoxin--NADP reductase type 2 family. As to quaternary structure, homodimer. FAD is required as a cofactor.

It catalyses the reaction 2 reduced [2Fe-2S]-[ferredoxin] + NADP(+) + H(+) = 2 oxidized [2Fe-2S]-[ferredoxin] + NADPH. The sequence is that of Ferredoxin--NADP reductase from Flavobacterium johnsoniae (strain ATCC 17061 / DSM 2064 / JCM 8514 / BCRC 14874 / CCUG 350202 / NBRC 14942 / NCIMB 11054 / UW101) (Cytophaga johnsonae).